A 376-amino-acid chain; its full sequence is Putative phosphoserine aminotransferase (376 aa).

Arg50 contacts L-glutamate. Pyridoxal 5'-phosphate contacts are provided by residues 84–85 (AT), Phe108, Thr154, Asp176, and Gln199. Position 200 is an N6-(pyridoxal phosphate)lysine (Lys200). 251–252 (NT) lines the pyridoxal 5'-phosphate pocket.

It belongs to the class-V pyridoxal-phosphate-dependent aminotransferase family. SerC subfamily. As to quaternary structure, homodimer. Pyridoxal 5'-phosphate serves as cofactor.

The protein resides in the cytoplasm. It catalyses the reaction O-phospho-L-serine + 2-oxoglutarate = 3-phosphooxypyruvate + L-glutamate. The enzyme catalyses 4-(phosphooxy)-L-threonine + 2-oxoglutarate = (R)-3-hydroxy-2-oxo-4-phosphooxybutanoate + L-glutamate. Its pathway is amino-acid biosynthesis; L-serine biosynthesis; L-serine from 3-phospho-D-glycerate: step 2/3. It participates in cofactor biosynthesis; pyridoxine 5'-phosphate biosynthesis; pyridoxine 5'-phosphate from D-erythrose 4-phosphate: step 3/5. In terms of biological role, catalyzes the reversible conversion of 3-phosphohydroxypyruvate to phosphoserine and of 3-hydroxy-2-oxo-4-phosphonooxybutanoate to phosphohydroxythreonine. This Mycobacterium bovis (strain ATCC BAA-935 / AF2122/97) protein is Putative phosphoserine aminotransferase.